The primary structure comprises 289 residues: tRNA dimethylallyltransferase (289 aa).

9 to 16 (GTTASGKT) is an ATP binding site. 11–16 (TASGKT) contacts substrate. The segment at 34–37 (DSLC) is interaction with substrate tRNA.

The protein belongs to the IPP transferase family. In terms of assembly, monomer. Requires Mg(2+) as cofactor.

It carries out the reaction adenosine(37) in tRNA + dimethylallyl diphosphate = N(6)-dimethylallyladenosine(37) in tRNA + diphosphate. Functionally, catalyzes the transfer of a dimethylallyl group onto the adenine at position 37 in tRNAs that read codons beginning with uridine, leading to the formation of N6-(dimethylallyl)adenosine (i(6)A). The sequence is that of tRNA dimethylallyltransferase from Campylobacter jejuni (strain RM1221).